The sequence spans 97 residues: MKIRPLHDRVIVKRKEVESKSAGGIVLTGTAAGKSTRGEVLAVGNGRILDNGEIKPLDVKVGDIVIFNDGYGVKSEKIDHEEVLIMSESDILAIVEA.

The protein belongs to the GroES chaperonin family. As to quaternary structure, heptamer of 7 subunits arranged in a ring. Interacts with the chaperonin GroEL.

The protein localises to the cytoplasm. In terms of biological role, together with the chaperonin GroEL, plays an essential role in assisting protein folding. The GroEL-GroES system forms a nano-cage that allows encapsulation of the non-native substrate proteins and provides a physical environment optimized to promote and accelerate protein folding. GroES binds to the apical surface of the GroEL ring, thereby capping the opening of the GroEL channel. The sequence is that of Co-chaperonin GroES from Yersinia enterocolitica serotype O:8 / biotype 1B (strain NCTC 13174 / 8081).